A 158-amino-acid polypeptide reads, in one-letter code: 6,7-dimethyl-8-ribityllumazine synthase (158 aa).

5-amino-6-(D-ribitylamino)uracil-binding positions include Phe-22, 57-59, and 81-83; these read SYE and TVI. The active-site Proton donor is the His-89. 5-amino-6-(D-ribitylamino)uracil is bound at residue Phe-114. Arg-128 lines the (2S)-2-hydroxy-3-oxobutyl phosphate pocket.

This sequence belongs to the DMRL synthase family. Forms an icosahedral capsid composed of 60 subunits, arranged as a dodecamer of pentamers.

It catalyses the reaction (2S)-2-hydroxy-3-oxobutyl phosphate + 5-amino-6-(D-ribitylamino)uracil = 6,7-dimethyl-8-(1-D-ribityl)lumazine + phosphate + 2 H2O + H(+). Its pathway is cofactor biosynthesis; riboflavin biosynthesis; riboflavin from 2-hydroxy-3-oxobutyl phosphate and 5-amino-6-(D-ribitylamino)uracil: step 1/2. Its function is as follows. Catalyzes the formation of 6,7-dimethyl-8-ribityllumazine by condensation of 5-amino-6-(D-ribitylamino)uracil with 3,4-dihydroxy-2-butanone 4-phosphate. This is the penultimate step in the biosynthesis of riboflavin. This is 6,7-dimethyl-8-ribityllumazine synthase from Blochmanniella pennsylvanica (strain BPEN).